We begin with the raw amino-acid sequence, 396 residues long: Elongation factor Tu (396 aa).

Residues 10-205 form the tr-type G domain; that stretch reads KPHVNIGTIG…ACDDSIPDPE (196 aa). Residues 19 to 26 are G1; sequence GHVDHGKT. 19–26 serves as a coordination point for GTP; the sequence is GHVDHGKT. Position 26 (Thr26) interacts with Mg(2+). Positions 62–66 are G2; sequence GITIN. A G3 region spans residues 83 to 86; it reads DAPG. GTP-binding positions include 83-87 and 138-141; these read DAPGH and NKCD. The G4 stretch occupies residues 138-141; that stretch reads NKCD. The tract at residues 175 to 177 is G5; sequence SAL.

This sequence belongs to the TRAFAC class translation factor GTPase superfamily. Classic translation factor GTPase family. EF-Tu/EF-1A subfamily. Monomer.

The protein resides in the cytoplasm. It carries out the reaction GTP + H2O = GDP + phosphate + H(+). GTP hydrolase that promotes the GTP-dependent binding of aminoacyl-tRNA to the A-site of ribosomes during protein biosynthesis. The chain is Elongation factor Tu from Corynebacterium diphtheriae (strain ATCC 700971 / NCTC 13129 / Biotype gravis).